We begin with the raw amino-acid sequence, 892 residues long: Inner centromere protein B (892 aa).

Disordered stretches follow at residues 50–124 (AEPE…KRMT), 160–182 (EHER…EMKT), 255–286 (LVNE…SLVV), 305–470 (KRES…PPPH), 502–555 (KRNT…RRED), 569–687 (QLEE…RERE), 702–760 (ERAA…AAAA), and 797–819 (NYGM…KPIP). The span at 60-69 (SQKRRRKKRT) shows a compositional bias: basic residues. Residues 90-99 (SANWSSSVRR) show a composition bias toward low complexity. Positions 259–272 (QPLNLSNESATPTG) are enriched in polar residues. A compositionally biased stretch (basic and acidic residues) spans 305–315 (KRESMTREAVR). Over residues 316–326 (KSIRQSISKKK) the composition is skewed to basic residues. Low complexity predominate over residues 332-343 (SSTSSQRSCHSS). Positions 431–444 (RAVDELSDDERPSE) are enriched in basic and acidic residues. Residues 455 to 470 (PSPPCPPSKIVKPPPH) are compositionally biased toward pro residues. 4 stretches are compositionally biased toward basic and acidic residues: residues 509–555 (PDPK…RRED), 569–602 (QLEE…EEKA), 609–687 (KKQE…RERE), and 702–754 (ERAA…KAKE). The segment at 512–725 (KSEEKERQRL…EERKKREQQQ (214 aa)) is SAH. An IN box region spans residues 802 to 876 (LNSDDSTDDE…RTSSAVWHSP (75 aa)). Residues Ser-869 and Ser-870 each carry the phosphoserine modification.

This sequence belongs to the INCENP family. Component of the CPC at least composed of survivin/birc5, incenp, cdca8/borealin and/or cdca9/dasra-A, and aurkb/aurora-B. Interacts (via C-terminus) with aurkb (via N-terminus and kinase domain). Interacts (via N-terminus) with birc5.1, birc5.2, cdca8 and cdca9. Interacts with mtus1.

Its subcellular location is the nucleus. The protein localises to the chromosome. It localises to the centromere. It is found in the cytoplasm. The protein resides in the cytoskeleton. Its subcellular location is the spindle. The protein localises to the midbody. It localises to the kinetochore. Its function is as follows. Component of the chromosomal passenger complex (CPC), a complex that acts as a key regulator of mitosis. The CPC complex has essential functions at the centromere in ensuring correct chromosome alignment and segregation and is required for chromatin-induced microtubule stabilization and spindle assembly. Acts as a scaffold regulating CPC localization and activity. The C-terminus associates with aurkb/aurora-B, the N-terminus associated with cdca8/borealin and/or cdca9/dasra-A tethers the CPC to the inner centromere, and the microtubule binding activity within the central SAH domain directs aurkb/aurora-B toward substrates near microtubules. Activates aurkb. This is Inner centromere protein B (incenp-b) from Xenopus laevis (African clawed frog).